Consider the following 404-residue polypeptide: NADH-quinone oxidoreductase subunit D 2 (404 aa).

It belongs to the complex I 49 kDa subunit family. NDH-1 is composed of 14 different subunits. Subunits NuoB, C, D, E, F, and G constitute the peripheral sector of the complex.

The protein localises to the cell inner membrane. It carries out the reaction a quinone + NADH + 5 H(+)(in) = a quinol + NAD(+) + 4 H(+)(out). Its function is as follows. NDH-1 shuttles electrons from NADH, via FMN and iron-sulfur (Fe-S) centers, to quinones in the respiratory chain. The immediate electron acceptor for the enzyme in this species is believed to be ubiquinone. Couples the redox reaction to proton translocation (for every two electrons transferred, four hydrogen ions are translocated across the cytoplasmic membrane), and thus conserves the redox energy in a proton gradient. This is NADH-quinone oxidoreductase subunit D 2 from Sinorhizobium medicae (strain WSM419) (Ensifer medicae).